A 427-amino-acid polypeptide reads, in one-letter code: Trigger factor (427 aa).

The 86-residue stretch at 163–248 folds into the PPIase FKBP-type domain; sequence GDTVVIDFVG…IHEVKTKEVP (86 aa).

It belongs to the FKBP-type PPIase family. Tig subfamily.

The protein localises to the cytoplasm. It carries out the reaction [protein]-peptidylproline (omega=180) = [protein]-peptidylproline (omega=0). Its function is as follows. Involved in protein export. Acts as a chaperone by maintaining the newly synthesized protein in an open conformation. Functions as a peptidyl-prolyl cis-trans isomerase. The chain is Trigger factor from Streptococcus agalactiae serotype Ia (strain ATCC 27591 / A909 / CDC SS700).